A 188-amino-acid chain; its full sequence is MKIGVLGVQGDVREHVEALHKLGVETLIVKLPEQLDMVDGLILPGGESTTMIRILKEMDMDEKLVERINNGLPVFATCAGVILLAKRIKNYSQEKLGVLDITVERNAYGRQVESFETFVEIPAVGKDPFRAIFIRAPRIVETGKNVEILATYDYDPVLVKEGNILACTFHPELTDDLRLHRYFLEMVK.

46-48 (GES) serves as a coordination point for L-glutamine. Cys-78 acts as the Nucleophile in catalysis. L-glutamine contacts are provided by residues Arg-105 and 134–135 (IR). Active-site charge relay system residues include His-170 and Glu-172.

Belongs to the glutaminase PdxT/SNO family. As to quaternary structure, in the presence of PdxS, forms a dodecamer of heterodimers. Only shows activity in the heterodimer.

The catalysed reaction is aldehydo-D-ribose 5-phosphate + D-glyceraldehyde 3-phosphate + L-glutamine = pyridoxal 5'-phosphate + L-glutamate + phosphate + 3 H2O + H(+). The enzyme catalyses L-glutamine + H2O = L-glutamate + NH4(+). It functions in the pathway cofactor biosynthesis; pyridoxal 5'-phosphate biosynthesis. Its function is as follows. Catalyzes the hydrolysis of glutamine to glutamate and ammonia as part of the biosynthesis of pyridoxal 5'-phosphate. The resulting ammonia molecule is channeled to the active site of PdxS. In Thermotoga maritima (strain ATCC 43589 / DSM 3109 / JCM 10099 / NBRC 100826 / MSB8), this protein is Pyridoxal 5'-phosphate synthase subunit PdxT.